A 273-amino-acid polypeptide reads, in one-letter code: ATP synthase subunit delta (273 aa).

Residues 55–78 (TDPAQSARPRPSSPSVSSAPRSAA) are disordered. Positions 57–78 (PAQSARPRPSSPSVSSAPRSAA) are enriched in low complexity.

This sequence belongs to the ATPase delta chain family. As to quaternary structure, F-type ATPases have 2 components, F(1) - the catalytic core - and F(0) - the membrane proton channel. F(1) has five subunits: alpha(3), beta(3), gamma(1), delta(1), epsilon(1). F(0) has three main subunits: a(1), b(2) and c(10-14). The alpha and beta chains form an alternating ring which encloses part of the gamma chain. F(1) is attached to F(0) by a central stalk formed by the gamma and epsilon chains, while a peripheral stalk is formed by the delta and b chains.

The protein resides in the cell membrane. Functionally, f(1)F(0) ATP synthase produces ATP from ADP in the presence of a proton or sodium gradient. F-type ATPases consist of two structural domains, F(1) containing the extramembraneous catalytic core and F(0) containing the membrane proton channel, linked together by a central stalk and a peripheral stalk. During catalysis, ATP synthesis in the catalytic domain of F(1) is coupled via a rotary mechanism of the central stalk subunits to proton translocation. In terms of biological role, this protein is part of the stalk that links CF(0) to CF(1). It either transmits conformational changes from CF(0) to CF(1) or is implicated in proton conduction. The chain is ATP synthase subunit delta from Streptomyces lividans.